Consider the following 393-residue polypeptide: PGA synthase CapB (393 aa).

Requires Mn(2+) as cofactor.

Functionally, catalyzes the biosynthesis of PGA (gamma-polyglutamic acid) from L-glutamate. Both the 44-kDa and the 33-kDa forms are required for PGA synthesis. This chain is PGA synthase CapB (capB), found in Bacillus subtilis (strain 168).